Here is a 567-residue protein sequence, read N- to C-terminus: Urease subunit alpha (567 aa).

The Urease domain occupies 129–567 (GGIDSHIHFI…LPLAQRYFLF (439 aa)). Residues histidine 134, histidine 136, and lysine 217 each contribute to the Ni(2+) site. Residue lysine 217 is modified to N6-carboxylysine. Position 219 (histidine 219) interacts with substrate. Ni(2+)-binding residues include histidine 246 and histidine 272. Residue histidine 320 is the Proton donor of the active site. Aspartate 360 contributes to the Ni(2+) binding site.

It belongs to the metallo-dependent hydrolases superfamily. Urease alpha subunit family. As to quaternary structure, heterotrimer of UreA (gamma), UreB (beta) and UreC (alpha) subunits. Three heterotrimers associate to form the active enzyme. The cofactor is Ni cation. In terms of processing, carboxylation allows a single lysine to coordinate two nickel ions.

The protein localises to the cytoplasm. The catalysed reaction is urea + 2 H2O + H(+) = hydrogencarbonate + 2 NH4(+). It participates in nitrogen metabolism; urea degradation; CO(2) and NH(3) from urea (urease route): step 1/1. The protein is Urease subunit alpha of Pseudomonas putida (strain W619).